Reading from the N-terminus, the 130-residue chain is Large ribosomal subunit protein bL12 (130 aa).

The protein belongs to the bacterial ribosomal protein bL12 family. In terms of assembly, homodimer. Part of the ribosomal stalk of the 50S ribosomal subunit. Forms a multimeric L10(L12)X complex, where L10 forms an elongated spine to which 2 to 4 L12 dimers bind in a sequential fashion. Binds GTP-bound translation factors.

In terms of biological role, forms part of the ribosomal stalk which helps the ribosome interact with GTP-bound translation factors. Is thus essential for accurate translation. The chain is Large ribosomal subunit protein bL12 from Nostoc sp. (strain PCC 7120 / SAG 25.82 / UTEX 2576).